The primary structure comprises 958 residues: Nuclear factor NF-kappa-B p100 subunit (958 aa).

The region spanning L40 to G230 is the RHD domain. The Nuclear localization signal signature appears at R343 to K347. Disordered stretches follow at residues P350–Q374 and C411–S442. A GRR region spans residues F352 to A390. The segment covering Y357–Q374 has biased composition (gly residues). Positions S412–I425 are enriched in polar residues. ANK repeat units lie at residues N500–N529, L539–I568, Y572–L603, H610–S639, S644–A674, and G678–S707. The segment at V705 to Q766 is disordered. Residues S724 to T734 are compositionally biased toward acidic residues. Basic and acidic residues predominate over residues E753–Q766. Positions V815–E901 constitute a Death domain. Over residues A904 to S916 the composition is skewed to basic and acidic residues. The segment at A904–Q958 is disordered. The segment covering A917–N931 has biased composition (polar residues).

As to quaternary structure, active NF-kappa-B is a heterodimer of an about 52 kDa DNA-binding subunit and the weak DNA-binding subunit p65. Two heterodimers might form a labile tetramer. In terms of processing, while translation occurs, the particular unfolded structure after the GRR repeat promotes the generation of p52 making it an acceptable substrate for the proteasome. This process is known as cotranslational processing. The processed form is active and the unprocessed form acts as an inhibitor (I kappa B-like), being able to form cytosolic complexes with NF-kappa B, trapping it in the cytoplasm. Complete folding of the region downstream of the GRR repeat precludes processing. Post-translationally, constitutive processing is tightly suppressed by its C-terminal processing inhibitory domain, named PID, which contains the death domain. As to expression, expressed in spleen.

The protein resides in the nucleus. Its subcellular location is the cytoplasm. Its function is as follows. Appears to have dual functions such as cytoplasmic retention of attached NF-kappa-B proteins and generation of p52 by a cotranslational processing. The proteasome-mediated process ensures the production of both p52 and p100 and preserves their independent function. p52 binds to the kappa-B consensus sequence 5'-GGRNNYYCC-3', located in the enhancer region of genes involved in immune response and acute phase reactions. In concert with RELB, may play a role in the regulation of the circadian clock. This Xenopus laevis (African clawed frog) protein is Nuclear factor NF-kappa-B p100 subunit (nfkb2).